Here is a 536-residue protein sequence, read N- to C-terminus: Bifunctional purine biosynthesis protein PurH (536 aa).

Residues 8-158 (IPAPDEVRIK…KNHAYVTIVT (151 aa)) enclose the MGS-like domain.

Belongs to the PurH family.

The enzyme catalyses (6R)-10-formyltetrahydrofolate + 5-amino-1-(5-phospho-beta-D-ribosyl)imidazole-4-carboxamide = 5-formamido-1-(5-phospho-D-ribosyl)imidazole-4-carboxamide + (6S)-5,6,7,8-tetrahydrofolate. The catalysed reaction is IMP + H2O = 5-formamido-1-(5-phospho-D-ribosyl)imidazole-4-carboxamide. It functions in the pathway purine metabolism; IMP biosynthesis via de novo pathway; 5-formamido-1-(5-phospho-D-ribosyl)imidazole-4-carboxamide from 5-amino-1-(5-phospho-D-ribosyl)imidazole-4-carboxamide (10-formyl THF route): step 1/1. Its pathway is purine metabolism; IMP biosynthesis via de novo pathway; IMP from 5-formamido-1-(5-phospho-D-ribosyl)imidazole-4-carboxamide: step 1/1. This is Bifunctional purine biosynthesis protein PurH from Rhizobium meliloti (strain 1021) (Ensifer meliloti).